A 282-amino-acid chain; its full sequence is Nucleotide-binding protein ABO_0549 (282 aa).

Gly8–Thr15 provides a ligand contact to ATP. Asp59 to Asn62 serves as a coordination point for GTP.

Belongs to the RapZ-like family.

Functionally, displays ATPase and GTPase activities. This is Nucleotide-binding protein ABO_0549 from Alcanivorax borkumensis (strain ATCC 700651 / DSM 11573 / NCIMB 13689 / SK2).